Reading from the N-terminus, the 85-residue chain is Large ribosomal subunit protein bL31B (85 aa).

It belongs to the bacterial ribosomal protein bL31 family. Type B subfamily. As to quaternary structure, part of the 50S ribosomal subunit.

The protein is Large ribosomal subunit protein bL31B of Serratia proteamaculans (strain 568).